The sequence spans 882 residues: DNA mismatch repair protein MutS (882 aa).

627 to 634 (GPNMAGKS) lines the ATP pocket.

It belongs to the DNA mismatch repair MutS family.

In terms of biological role, this protein is involved in the repair of mismatches in DNA. It is possible that it carries out the mismatch recognition step. This protein has a weak ATPase activity. This Anaeromyxobacter dehalogenans (strain 2CP-1 / ATCC BAA-258) protein is DNA mismatch repair protein MutS.